Here is a 294-residue protein sequence, read N- to C-terminus: ATP synthase gamma chain (294 aa).

This sequence belongs to the ATPase gamma chain family. In terms of assembly, F-type ATPases have 2 components, CF(1) - the catalytic core - and CF(0) - the membrane proton channel. CF(1) has five subunits: alpha(3), beta(3), gamma(1), delta(1), epsilon(1). CF(0) has three main subunits: a, b and c.

The protein resides in the cell inner membrane. Its function is as follows. Produces ATP from ADP in the presence of a proton gradient across the membrane. The gamma chain is believed to be important in regulating ATPase activity and the flow of protons through the CF(0) complex. This chain is ATP synthase gamma chain, found in Rhizobium etli (strain CIAT 652).